Consider the following 87-residue polypeptide: Phosphoribosyl-ATP pyrophosphatase (87 aa).

The protein belongs to the PRA-PH family.

Its subcellular location is the cytoplasm. The catalysed reaction is 1-(5-phospho-beta-D-ribosyl)-ATP + H2O = 1-(5-phospho-beta-D-ribosyl)-5'-AMP + diphosphate + H(+). Its pathway is amino-acid biosynthesis; L-histidine biosynthesis; L-histidine from 5-phospho-alpha-D-ribose 1-diphosphate: step 2/9. This Pseudarthrobacter chlorophenolicus (strain ATCC 700700 / DSM 12829 / CIP 107037 / JCM 12360 / KCTC 9906 / NCIMB 13794 / A6) (Arthrobacter chlorophenolicus) protein is Phosphoribosyl-ATP pyrophosphatase.